Reading from the N-terminus, the 74-residue chain is Antimicrobial peptide HsAp2 (74 aa).

Positions 1–21 (MSRRLILILVLVAMLVKTMAG) are cleaved as a signal peptide. Residues 22 to 33 (MESKWVETTYEI) constitute a propeptide that is removed on maturation. Residue Pro-65 is modified to Proline amide. Residues 69 to 74 (AISEQT) constitute a propeptide that is removed on maturation.

The protein belongs to the non-disulfide-bridged peptide (NDBP) superfamily. Medium-length antimicrobial peptide (group 3) family. Expressed by the venom gland.

The protein resides in the secreted. It localises to the target cell membrane. Its function is as follows. Possesses antimicrobial activity against both Gram-negative and Gram-positive bacteria, as well as against the fungus C.tropicalis. Also possesses a relatively high hemolytic activity. May act by disrupting the integrity of the bacterial cell membrane. This is Antimicrobial peptide HsAp2 from Heterometrus spinifer (Asia giant forest scorpion).